The following is a 330-amino-acid chain: Diacylglycerol acyltransferase/mycolyltransferase Ag85A (330 aa).

An N-terminal signal peptide occupies residues 1-42; it reads MKFVDRFRGAVAGMLRRLVVEAMGVALLSALIGVVGSAPAEA. 84–85 contributes to the substrate binding site; that stretch reads LR. The tract at residues 100 to 110 is fibronectin-binding; the sequence is FEWYYQSGISV. Cysteines 129 and 134 form a disulfide. Positions 168 and 196 each coordinate substrate. The active-site Nucleophile is the serine 168. Glutamate 272 is a catalytic residue. Residues 274 to 277, lysine 281, and 304 to 306 contribute to the substrate site; these read LVRT and HSW. Histidine 304 is an active-site residue.

The protein belongs to the mycobacterial A85 antigen family. Homodimer.

It is found in the secreted. The protein resides in the cell wall. Its subcellular location is the cytoplasm. The catalysed reaction is an acyl-CoA + a 1,2-diacyl-sn-glycerol = a triacyl-sn-glycerol + CoA. It carries out the reaction 2 alpha,alpha'-trehalose 6-mycolate = alpha,alpha'-trehalose 6,6'-bismycolate + alpha,alpha-trehalose. Its function is as follows. The antigen 85 proteins (FbpA, FbpB, FbpC) are responsible for the high affinity of mycobacteria for fibronectin, a large adhesive glycoprotein, which facilitates the attachment of M.tuberculosis to murine alveolar macrophages (AMs). They also help to maintain the integrity of the cell wall by catalyzing the transfer of mycolic acids to cell wall arabinogalactan, and through the synthesis of alpha,alpha-trehalose dimycolate (TDM, cord factor). They catalyze the transfer of a mycoloyl residue from one molecule of alpha,alpha-trehalose monomycolate (TMM) to another TMM, leading to the formation of TDM. FbpA mediates triacylglycerol (TAG) formation with long-chain acyl-CoA as the acyl donor and 1,2-dipalmitoyl-sn-glycerol (1,2-dipalmitin) as the acyl acceptor. It has a preference for C26:0-CoA over C18:1-CoA. This is Diacylglycerol acyltransferase/mycolyltransferase Ag85A (fbpA) from Mycobacterium leprae (strain TN).